A 145-amino-acid polypeptide reads, in one-letter code: MDIHQILKLLPHRYPFLLVDRVNELERGKRILAIKNVTINEPFFTGHFPARPVMPGVLILEALAQAAGLLSFDMMGEAPGDDKVFYFVGIDGARFKRPVEPGDQLILDVELDRIKGGIYKFKGVARVGDSVACEAEIMCTMRTVA.

His47 is a catalytic residue.

This sequence belongs to the thioester dehydratase family. FabZ subfamily.

It is found in the cytoplasm. The enzyme catalyses a (3R)-hydroxyacyl-[ACP] = a (2E)-enoyl-[ACP] + H2O. Involved in unsaturated fatty acids biosynthesis. Catalyzes the dehydration of short chain beta-hydroxyacyl-ACPs and long chain saturated and unsaturated beta-hydroxyacyl-ACPs. This Acidovorax sp. (strain JS42) protein is 3-hydroxyacyl-[acyl-carrier-protein] dehydratase FabZ.